Here is a 119-residue protein sequence, read N- to C-terminus: V-type proton ATPase subunit F (119 aa).

The protein belongs to the V-ATPase F subunit family. V-ATPase is a heteromultimeric enzyme made up of two complexes: the ATP-hydrolytic V1 complex and the proton translocation V0 complex. The V1 complex consists of three catalytic AB heterodimers that form a heterohexamer, three peripheral stalks each consisting of EG heterodimers, one central rotor including subunits D and F, and the regulatory subunits C and H. The proton translocation complex V0 consists of the proton transport subunit a, a ring of proteolipid subunits c9c'', rotary subunit d, subunits e and f, and the accessory subunits ATP6AP1/Ac45 and ATP6AP2/PRR.

The protein localises to the cytoplasmic vesicle. Its subcellular location is the secretory vesicle. The protein resides in the synaptic vesicle membrane. It is found in the clathrin-coated vesicle membrane. Functionally, subunit of the V1 complex of vacuolar(H+)-ATPase (V-ATPase), a multisubunit enzyme composed of a peripheral complex (V1) that hydrolyzes ATP and a membrane integral complex (V0) that translocates protons. V-ATPase is responsible for acidifying and maintaining the pH of intracellular compartments and in some cell types, is targeted to the plasma membrane, where it is responsible for acidifying the extracellular environment. This chain is V-type proton ATPase subunit F (ATP6V1F), found in Homo sapiens (Human).